The following is a 512-amino-acid chain: RLQLQESGPGLVKPSETLSLTCIVSGGPIRRTGYYWGWIRQPPGKGLEWIGGVYYTGSIYYNPSLRGRVTISVDTSRNQFSLNLRSMSAADTAMYYCARGNPPPYYDIGTGSDDGIDVWGQGTTVHVSSAPTKAPDVFPIISGCRHPKDNSPVVLACLITGYHPTSVTVTWYMGTQSQPQRTFPEIQRRDSYYMTSSQLSTPLQQWRQGEYKCVVQHTASKSKKEIFRWPESPKAQASSVPTAQPQAEGSLAKATTAPATTRNTGRGGEEKKKEKEKEEQEERETKTPECPSHTQPLGVYLLTPAVQDLWLRDKATFTCFVVGSDLKDAHLTWEVAGKVPTGGVEEGLLERHSNGSQSQHSRLTLPRSLWNAGTSVTCTLNHPSLPPQRLMALREPAAQAPVKLSLNLLASSDPPEAASWLLCEVSGFSPPNILLMWLEDQREVNTSGFAPARPPPQPGSTTFWAWSVLRVPAPPSPQPATYTCVVSHEDSRTLLNASRSLEVSYVTDHGPM.

2 Ig-like domains span residues 1 to 97 (RLQL…MYYC) and 135 to 227 (PDVF…KEIF). The tract at residues 1-129 (RLQLQESGPG…GQGTTVHVSS (129 aa)) is variable (V) domain, involved in antigen recognition. Cystine bridges form between Cys-22-Cys-97 and Cys-157-Cys-213. The segment at 130 to 512 (APTKAPDVFP…VSYVTDHGPM (383 aa)) is constant (C) domain. The interval 225-296 (EIFRWPESPK…TPECPSHTQP (72 aa)) is disordered. The segment covering 235-247 (AQASSVPTAQPQA) has biased composition (polar residues). A glycan (O-linked (GalNAc...) serine) is linked at Ser-238. Residues Thr-255, Thr-256, Thr-260, and Thr-261 are each glycosylated (O-linked (GalNAc...) threonine). Residues 267–287 (GGEEKKKEKEKEEQEERETKT) are compositionally biased toward basic and acidic residues. 2 consecutive Ig-like domains span residues 304–392 (PAVQ…RLMA) and 396–502 (PAAQ…RSLE). Intrachain disulfides connect Cys-319–Cys-378 and Cys-423–Cys-484. N-linked (GlcNAc...) asparagine glycans are attached at residues Asn-354, Asn-445, and Asn-496.

Immunoglobulins are composed of two identical heavy chains and two identical light chains; disulfide-linked. An IgD molecule contains thus a delta heavy chain combined with either a kappa or a lambda light chains. Kappa light chains are found predominantly on the membrane IgD (mIgD) form and lambda on the secreted IgD (sIgD) form, this fact is poorly understood. Membrane-bound IgD molecules are non-covalently associated with a heterodimer of CD79A and CD79B.

Its subcellular location is the secreted. It is found in the cell membrane. Its function is as follows. Immunoglobulins, also known as antibodies, are membrane-bound or secreted glycoproteins produced by B lymphocytes. In the recognition phase of humoral immunity, the membrane-bound immunoglobulins serve as receptors which, upon binding of a specific antigen, trigger the clonal expansion and differentiation of B lymphocytes into immunoglobulins-secreting plasma cells. Secreted immunoglobulins mediate the effector phase of humoral immunity, which results in the elimination of bound antigens. The antigen binding site is formed by the variable domain of one heavy chain, together with that of its associated light chain. Thus, each immunoglobulin has two antigen binding sites with remarkable affinity for a particular antigen. The variable domains are assembled by a process called V-(D)-J rearrangement and can then be subjected to somatic hypermutations which, after exposure to antigen and selection, allow affinity maturation for a particular antigen. IgD is the major antigen receptor isotype on the surface of most peripheral B cells, where it is coexpressed with IgM. The membrane-bound IgD (mIgD) induces the phosphorylation of CD79A and CD79B by the Src family of protein tyrosine kinases. Soluble IgD (sIgD) concentration in serum is below those of IgG, IgA, and IgM but much higher than that of IgE. IgM and IgD molecules present on B cells have identical V regions and antigen-binding sites. After the antigen binds to the B cell receptor, the secreted form sIgD is shut off. IgD is a potent inducer of TNF, IL1B, and IL1RN. IgD also induces release of IL6, IL10, and LIF from peripheral blood mononuclear cells. Monocytes seem to be the main producers of cytokines in vitro in the presence of IgD. In Homo sapiens (Human), this protein is Immunoglobulin delta heavy chain.